A 94-amino-acid chain; its full sequence is Defensin alpha 5 (94 aa).

The N-terminal stretch at 1 to 19 (MRTIAILAAILLVALQAQA) is a signal peptide. 3 cysteine pairs are disulfide-bonded: Cys-65/Cys-93, Cys-67/Cys-82, and Cys-72/Cys-92.

It belongs to the alpha-defensin family. As to quaternary structure, homodimer. Homotetramer. Interacts with B.antracis lef/lethal factor. Post-translationally, glycosylated. Proteolytically cleaved at Arg-62 by trypsin. Both the propeptide form proHD5/HD5(20-94) and HD5(56-94) are cleaved into the lumenal peptide form HD5(63-94) by trypsin. Unprocessed proHD5 exerts antimicrobial activities, but peptide potency is enhanced by peptide processing. Proteolytically cleaved in duodenal fluid; derived fragments are antimicrobially active against commensal bacteria (in vitro). In terms of processing, (Microbial infection) The disulfide bridges and homodimerization are a prerequisite for the enhancement of S.flexneri adhesion and invasion. Expressed in the gastrointestinal, reproductive, and urinary tracts (at protein level). Expressed in Paneth cells of the small intestine (at protein level). Expressed throughout the urothelium of the lower urinary tract and in the collecting tubules of the kidney (at protein level). Expressed in stratified squamous epithelial cells of the female genital tract epithelia, such as in vagina, ectocervix, endocervix, endometrium, and fallopian tube (at protein level). Endometrial expression correlates with stages of the menstrual cycle: Expression is low during the early proliferative phase, increased during the mid- to late proliferative phase, peaks during the early secretory phase of the cycle, and decreases during the mid- to late secretory phase.

Its subcellular location is the secreted. The protein resides in the cytoplasmic vesicle. It localises to the secretory vesicle. Its function is as follows. Host-defense peptide that maintains sterility in the urogenital system. Has antimicrobial activity against a wide range of bacteria, including Gram-negative E.coli, P.aeruginosa and S.typhimurium, and Gram-positive E.aerogenes, S.aureus, B.cereus, E.faecium and L.monocytogenes. Confers resistance to intestinal infection by S.typhimurium. Exhibits antimicrobial activity against enteric commensal bacteria such as B.adolescentis, L.acidophilus, B.breve, L.fermentum, B.longum and S.thermophilus. Binds to bacterial membranes and causes membrane disintegration. Induces the secretion of the chemokine IL-8 by intestinal epithelial cells. Binds to B.antracis lef/lethal factor, a major virulence factor from B.anthracis, and neutralizes its enzymatic activity. Functionally, (Microbial infection) Acts as a target for S.flexneri infection by binding to the bacterium, possibly via bacterial surface proteins, and thereby augmenting infectivity via enhanced bacterial adhesion and invasion of epithelial cells and tissues. This is Defensin alpha 5 (DEFA5) from Homo sapiens (Human).